A 98-amino-acid chain; its full sequence is MAPRKPSKKVGPQKRPSAEKRVITSKKKQLRNQSFKSKVRTILKKFELAVQSGDVESISAGLRSVYSIADKAVKRGIFKKGKADRVKSRASERACPAA.

Residues 1-12 (MAPRKPSKKVGP) show a composition bias toward basic residues. The tract at residues 1-31 (MAPRKPSKKVGPQKRPSAEKRVITSKKKQLR) is disordered.

Belongs to the bacterial ribosomal protein bS20 family.

In terms of biological role, binds directly to 16S ribosomal RNA. This is Small ribosomal subunit protein bS20 from Chlamydia trachomatis serovar L2 (strain ATCC VR-902B / DSM 19102 / 434/Bu).